The primary structure comprises 758 residues: ATP-dependent RNA helicase dbp7 (758 aa).

Disordered regions lie at residues 28–98 and 110–130; these read TWRD…NQPR and EPQK…KPTN. Basic residues predominate over residues 35–45; the sequence is AKKIAKHHAKG. Residues 84–98 show a composition bias toward polar residues; sequence GKQQSHGHPHSNQPR. The segment covering 110-125 has biased composition (basic and acidic residues); it reads EPQKAEEVKEEGHVEN. The Q motif signature appears at 138–167; the sequence is DTFTNLGLSPNLAAHLLTKLELKAPTAIQK. A Helicase ATP-binding domain is found at 171–372; sequence SQLLKEEGDA…EISLKDAVHI (202 aa). 184-191 lines the ATP pocket; the sequence is AETGSGKT. The short motif at 308-311 is the DEAD box element; it reads DEGD. In terms of domain architecture, Helicase C-terminal spans 398 to 620; the sequence is QLKQSYAVVA…NVESGNKDWE (223 aa). 2 stretches are compositionally biased toward basic and acidic residues: residues 455–471 and 697–709; these read KEDG…EEKP and GKEE…KAER. Disordered regions lie at residues 455–483 and 697–745; these read KEDG…APAT and GKEE…RAKM.

It belongs to the DEAD box helicase family. DDX31/DBP7 subfamily.

The protein resides in the nucleus. It localises to the nucleolus. The enzyme catalyses ATP + H2O = ADP + phosphate + H(+). ATP-binding RNA helicase involved in the biogenesis of 60S ribosomal subunits and is required for the normal formation of 25S and 5.8S rRNAs. In Aspergillus fumigatus (strain ATCC MYA-4609 / CBS 101355 / FGSC A1100 / Af293) (Neosartorya fumigata), this protein is ATP-dependent RNA helicase dbp7 (dbp7).